Consider the following 181-residue polypeptide: Probable pyruvoyl-dependent arginine decarboxylase (181 aa).

Pyruvic acid (Ser) is present on Ser-43.

The protein belongs to the PdaD family. Pyruvate is required as a cofactor.

It carries out the reaction L-arginine + H(+) = agmatine + CO2. The polypeptide is Probable pyruvoyl-dependent arginine decarboxylase (Chlorobium luteolum (strain DSM 273 / BCRC 81028 / 2530) (Pelodictyon luteolum)).